We begin with the raw amino-acid sequence, 326 residues long: Dipeptide transport ATP-binding protein DppD (326 aa).

One can recognise an ABC transporter domain in the interval 5–255; the sequence is IRVEDLRAVY…PLHPYTRGLI (251 aa). Residues 44 to 49, Asn-61, and Gln-97 each bind ATP; that span reads ASGKST. [4Fe-4S] cluster is bound by residues Cys-285, Cys-291, Cys-298, and Cys-316.

The protein belongs to the ABC transporter superfamily.

The protein resides in the cell membrane. The catalysed reaction is a dipeptide(out) + ATP + H2O = a dipeptide(in) + ADP + phosphate + H(+). Its activity is regulated as follows. The C-terminal iron-sulfur cluster may stabilize the structure of the C-terminal loops and may function in the regulation of the transport process. Part of the ABC transporter Dpp involved in dipeptide transport. Responsible for energy coupling to the transport system. The chain is Dipeptide transport ATP-binding protein DppD from Caldanaerobacter subterraneus subsp. tengcongensis (strain DSM 15242 / JCM 11007 / NBRC 100824 / MB4) (Thermoanaerobacter tengcongensis).